A 1256-amino-acid polypeptide reads, in one-letter code: Neuronal cell adhesion molecule (1256 aa).

Residues 1 to 29 form the signal peptide; the sequence is MQLKIMPKKKHLSAGGVPLILFLCQMISA. Residues 30–1119 are Extracellular-facing; sequence LDVPLDLVQP…ASRQVDIATQ (1090 aa). 2 Ig-like C2-type domains span residues 40–128 and 135–229; these read PTIT…AAVS and PSRS…QPIS. 2 disulfides stabilise this stretch: C62–C117 and C161–C212. N-linked (GlcNAc...) asparagine glycosylation is present at N77. Residues N217, N239, N245, N270, N308, and N371 are each glycosylated (N-linked (GlcNAc...) asparagine). 4 consecutive Ig-like C2-type domains span residues 261 to 350, 355 to 442, 448 to 535, and 539 to 626; these read PPTF…ISVT, PYWI…AFVN, PRIL…VHLE, and PTRI…AVLR. A disulfide bond links C286 and C334. A disulfide bridge connects residues C376 and C426. Residues N427 and N501 are each glycosylated (N-linked (GlcNAc...) asparagine). Disulfide bonds link C470–C519 and C561–C610. 8 N-linked (GlcNAc...) asparagine glycosylation sites follow: N613, N710, N796, N852, N987, N1003, N1013, and N1067. Fibronectin type-III domains lie at 643-738, 740-837, 842-944, and 948-1045; these read PPFD…TKAA, PDQN…SGED, APGN…TPEG, and APSS…VDEA. The helical transmembrane segment at 1120-1142 threads the bilayer; it reads GWFIGLMCAVALLILILLIVCFI. Over 1143-1256 the chain is Cytoplasmic; sequence RRNKGGKYPV…SPVNAMNSFV (114 aa). Basic and acidic residues predominate over residues 1151–1171; the sequence is PVKEKEDAHADPEIQPMKEDD. The tract at residues 1151–1256 is disordered; sequence PVKEKEDAHA…SPVNAMNSFV (106 aa). Residue T1173 is modified to Phosphothreonine. At Y1177 the chain carries Phosphotyrosine. At S1178 the chain carries Phosphoserine. Positions 1193–1202 are enriched in basic and acidic residues; it reads PSDRTVKKED. 6 positions are modified to phosphoserine: S1203, S1206, S1223, S1242, S1243, and S1247. Polar residues predominate over residues 1240–1256; the sequence is NESSEAPSPVNAMNSFV.

This sequence belongs to the immunoglobulin superfamily. L1/neurofascin/NgCAM family. In terms of assembly, constituent of a NFASC/NRCAM/ankyrin-G complex. Detected in a complex with CNTN1 and PTPRB. Interacts with GLDN/gliomedin and MYOC. In terms of tissue distribution, detected in sciatic nerve. Detected in brain, especially in the cerebellum Purkinje cell layer, inner granule cell layer and molecular layer (at protein level). Detected in neurons and Schwann cells.

The protein resides in the cell membrane. It is found in the cell projection. Its subcellular location is the axon. The protein localises to the secreted. Cell adhesion protein that is required for normal responses to cell-cell contacts in brain and in the peripheral nervous system. Plays a role in neurite outgrowth in response to contactin binding. Plays a role in mediating cell-cell contacts between Schwann cells and axons. Plays a role in the formation and maintenance of the nodes of Ranvier on myelinated axons. Nodes of Ranvier contain clustered sodium channels that are crucial for the saltatory propagation of action potentials along myelinated axons. During development, nodes of Ranvier are formed by the fusion of two heminodes. Required for normal clustering of sodium channels at heminodes; not required for the formation of mature nodes with normal sodium channel clusters. Required, together with GLDN, for maintaining NFASC and sodium channel clusters at mature nodes of Ranvier. This chain is Neuronal cell adhesion molecule (Nrcam), found in Mus musculus (Mouse).